The chain runs to 36 residues: MVTKYSSIFMSPILSNPPILYFSDCSREXYQKXLTN.

The Peptidase M12B domain maps to Met1–Asn36.

This sequence belongs to the venom metalloproteinase (M12B) family. P-III subfamily. P-IIIa sub-subfamily. As to quaternary structure, monomer. The cofactor is Zn(2+). Post-translationally, the N-terminus is blocked. In terms of processing, glycosylated. Expressed by the venom gland.

Its subcellular location is the secreted. Inhibited by EDTA, but not inhibited by iodoacetamide, PMSF and pepstatin A. Functionally, snake venom zinc metalloprotease that exhibits strong hemorrhagic activity. It also degrades alpha-chain of fibrinogen (FGA), but not the beta- and the gamma-chains. Possesses potent azocaseinolytic activity and cleaves insulin B-chain, hydrolyzing it at positions Ala(14)-Leu(15), followed by Tyr(16)-Leu(17) and His(10)-Leu(11). In vivo, subcutaneous injection into mice induces strong hemorrhage. The protein is Zinc metalloproteinase-disintegrin-like VaH1 of Vipera ammodytes ammodytes (Western sand viper).